Consider the following 177-residue polypeptide: Large ribosomal subunit protein bL9 (177 aa).

The segment at glutamate 151–alanine 177 is disordered. The segment covering glutamate 157–glutamate 167 has biased composition (low complexity). Residues alanine 168 to alanine 177 are compositionally biased toward basic and acidic residues.

Belongs to the bacterial ribosomal protein bL9 family.

In terms of biological role, binds to the 23S rRNA. The sequence is that of Large ribosomal subunit protein bL9 from Solidesulfovibrio magneticus (strain ATCC 700980 / DSM 13731 / RS-1) (Desulfovibrio magneticus).